Consider the following 101-residue polypeptide: Putative fatty acid-binding protein 5-like protein 3 (101 aa).

This sequence belongs to the calycin superfamily. Fatty-acid binding protein (FABP) family.

In terms of biological role, high specificity for fatty acids. This is Putative fatty acid-binding protein 5-like protein 3 (FABP5P3) from Homo sapiens (Human).